The following is a 309-amino-acid chain: MRIALAPMEGLVDELLRDLLTRVGGIDWCVTEFVRVCDRLLPVAQFEKLAPELRHGWRTRAGTPMHLQLLGSDPACLAENAALAAELGAPAIDLNFGCPAKTSTARGADGCCSTSRNCCMPSSARCAGPCRRCAGDRQDAPGVRPARGRPGVRRALVEGGVAHLVVHARTKVEGYRPPASWEWLARVREAVAVPVYANRKSGRRRIGCREISGVEDVMLGCGLVSRPDLARQIAMRAPDARSSRRAGVRYSRWCASSGGAPGSGSRRATPLAGSSSGWACWRAVIRRRPRCSPNCAGRTTAGGWMPCWA.

Residues 7 to 9 (PME) and Q68 each bind FMN. The Proton donor role is filled by C98. FMN-binding positions include R137, N198, and 220–221 (GC).

The protein belongs to the Dus family. DusC subfamily. The cofactor is FMN.

It catalyses the reaction 5,6-dihydrouridine(16) in tRNA + NADP(+) = uridine(16) in tRNA + NADPH + H(+). The catalysed reaction is 5,6-dihydrouridine(16) in tRNA + NAD(+) = uridine(16) in tRNA + NADH + H(+). In terms of biological role, catalyzes the synthesis of 5,6-dihydrouridine (D), a modified base found in the D-loop of most tRNAs, via the reduction of the C5-C6 double bond in target uridines. Specifically modifies U16 in tRNAs. The polypeptide is tRNA-dihydrouridine(16) synthase (Azotobacter vinelandii).